A 140-amino-acid chain; its full sequence is uncharacterized protein (140 aa).

A run of 3 helical transmembrane segments spans residues 42–62 (AFLF…IFAS), 65–85 (ASFL…SALG), and 96–116 (RASD…MLCF).

The protein resides in the membrane. This is an uncharacterized protein from Saccharomyces cerevisiae (strain ATCC 204508 / S288c) (Baker's yeast).